The primary structure comprises 304 residues: UDP-N-acetylenolpyruvoylglucosamine reductase (304 aa).

Positions 32–198 (RVGGPADILV…LSAELELQEG (167 aa)) constitute an FAD-binding PCMH-type domain. Residue Arg-177 is part of the active site. The Proton donor role is filled by Ser-227. The active site involves Glu-297.

The protein belongs to the MurB family. The cofactor is FAD.

The protein resides in the cytoplasm. It catalyses the reaction UDP-N-acetyl-alpha-D-muramate + NADP(+) = UDP-N-acetyl-3-O-(1-carboxyvinyl)-alpha-D-glucosamine + NADPH + H(+). The protein operates within cell wall biogenesis; peptidoglycan biosynthesis. In terms of biological role, cell wall formation. The chain is UDP-N-acetylenolpyruvoylglucosamine reductase from Clostridioides difficile (strain 630) (Peptoclostridium difficile).